The following is a 947-amino-acid chain: Cell adhesion molecule CEACAM5 (947 aa).

The N-terminal stretch at 1-34 (MEASSVLPCKWCTHLQGLLLTASFLTCCHLPTTA) is a signal peptide. Ig-like V-type domains lie at 35 to 132 (QITI…EIVS), 166 to 259 (SEGG…VQLY), 270 to 378 (PLQV…LHVN), 392 to 498 (RLSI…LQLD), 509 to 615 (QVKI…LHVN), 642 to 733 (GESV…VQLQ), and 746 to 851 (DQLI…VQVH). Residues Asn57, Asn103, Asn110, Asn207, Asn224, Asn341, Asn461, Asn472, Asn578, Asn698, Asn709, Asn816, and Asn823 are each glycosylated (N-linked (GlcNAc...) asparagine). One can recognise an Ig-like C2-type 1 domain in the interval 859-943 (PFVRVTDTTV…SKSSLPVRLA (85 aa)). Cys878 and Cys926 are joined by a disulfide.

It belongs to the immunoglobulin superfamily. CEA family. As to quaternary structure, homodimer.

It localises to the cell membrane. It is found in the apical cell membrane. The protein resides in the cell surface. Cell surface glycoprotein that plays a role in cell adhesion, intracellular signaling and tumor progression. Mediates homophilic and heterophilic cell adhesion with other carcinoembryonic antigen-related cell adhesion molecules, such as CEACAM6. Plays a role as an oncogene by promoting tumor progression; induces resistance to anoikis of colorectal carcinoma cells. This Mus musculus (Mouse) protein is Cell adhesion molecule CEACAM5.